The sequence spans 502 residues: ATP synthase subunit alpha (502 aa).

Residues 115 to 137 (VDGLGPVETTETRPIESPAPGVM) are disordered. Residue 169–176 (GDRQTGKT) coordinates ATP.

The protein belongs to the ATPase alpha/beta chains family. In terms of assembly, F-type ATPases have 2 components, CF(1) - the catalytic core - and CF(0) - the membrane proton channel. CF(1) has five subunits: alpha(3), beta(3), gamma(1), delta(1), epsilon(1). CF(0) has three main subunits: a(1), b(2) and c(9-12). The alpha and beta chains form an alternating ring which encloses part of the gamma chain. CF(1) is attached to CF(0) by a central stalk formed by the gamma and epsilon chains, while a peripheral stalk is formed by the delta and b chains.

Its subcellular location is the cell membrane. It catalyses the reaction ATP + H2O + 4 H(+)(in) = ADP + phosphate + 5 H(+)(out). Its function is as follows. Produces ATP from ADP in the presence of a proton gradient across the membrane. The alpha chain is a regulatory subunit. The chain is ATP synthase subunit alpha from Geobacillus kaustophilus (strain HTA426).